A 521-amino-acid polypeptide reads, in one-letter code: uncharacterized protein (521 aa).

The stretch at 14-41 (QFQQMQHQMQQQQQQQMQQQQQQQQQQQ) forms a coiled coil. Low complexity-rich tracts occupy residues 238 to 266 (LSGSTSTTNNNNTTTTTTTTSSNNITSSS), 275 to 353 (SSTS…NNNN), and 423 to 482 (PRLS…PNNP). Disordered regions lie at residues 238–357 (LSGS…ISGF) and 413–491 (TAVA…SNNG).

This is an uncharacterized protein from Dictyostelium discoideum (Social amoeba).